A 253-amino-acid chain; its full sequence is CD151 antigen (253 aa).

The Cytoplasmic segment spans residues 1 to 18 (MGEFNEKKATCGTVCLKY). S-palmitoyl cysteine attachment occurs at residues cysteine 11 and cysteine 15. The chain crosses the membrane as a helical span at residues 19-39 (LLFTYNCCFWLAGLAVMAVGI). Residues 40–57 (WTLALKSDYISLLASSTY) are Extracellular-facing. The helical transmembrane segment at 58–78 (LATAYILVVAGVVVMVTGVLG) threads the bilayer. Topologically, residues 79–91 (CCATFKERRNLLR) are cytoplasmic. A helical transmembrane segment spans residues 92–112 (LYFILLLIIFLLEIIAGILAY). Topologically, residues 113-221 (VYYQQLNTEL…LETFIQEHLR (109 aa)) are extracellular. An N-linked (GlcNAc...) asparagine glycan is attached at asparagine 159. A helical membrane pass occupies residues 222 to 242 (VIGAVGIGIACVQVFGMIFTC). 2 S-palmitoyl cysteine lipidation sites follow: cysteine 242 and cysteine 243. Topologically, residues 243-253 (CLYRSLKLEHY) are cytoplasmic.

It belongs to the tetraspanin (TM4SF) family. In terms of assembly, interacts with integrins ITGA3:ITGB1, ITGA5:ITGB1, ITGA3:ITGB1 and ITGA6:ITGB4 and with CD9 and CD181. Interacts (via the second extracellular domain) with integrin ITGAV:ITGB3. Interacts with ITGA3; this interaction modulates ITGA3 glycosylation pattern. Interacts with F11R. Interacts with RAC1 and CDC42; these interactions mediate physical association of RAC1 and CDC42 with integrin adhesion receptor complexes. In terms of processing, palmitoylated. Palmitoylation by ZDHHC2 regulates CD151 expression, association with other tetraspanin family proteins and function in cell adhesion. Ubiquitinated by RNF128 on lysine residues present in the tetraspanin amino terminus via 'Lys-48'-linked ubiquitin leading to proteasomal degradation.

The protein resides in the cell membrane. Its function is as follows. Structural component of specialized membrane microdomains known as tetraspanin-enriched microdomains (TERMs), which act as platforms for receptor clustering and signaling. Plays a role in various cellular and molecular mechanism through its association with both integrin and non-integrin proteins. These interactions facilitate critical cellular functions, including cell-to-cell communication, wound healing, platelet aggregation, trafficking, cell motility, and angiogenesis. Via interaction with JAM-A/F11R and integrin ITGA3:ITGB1, promotes the recruitment of signaling molecules such as RAC1, CDC42 and RhoGTPases to facilitate the polarization of epithelial cells and the reorganization of the actin cytoskeleton, which are critical steps in cell migration process. Regulates the glycosylation pattern of ITGA3:ITGB1 thereby modulating its activity. Plays an essential role in the maintenance of central laminin-binding integrin ITGA6:ITGB4-containing adhesion complexes. Essential for the proper assembly of the glomerular and tubular basement membranes in kidney. Contributes to T-cell activation by modulating integrin signaling leading to activation of downstream targets PTK2 and MAPK1/MAPK3. The chain is CD151 antigen (Cd151) from Mus musculus (Mouse).